The following is a 157-amino-acid chain: Transcriptional repressor NrdR (157 aa).

The tract at residues 1-21 (MRCPYCSSEDSQVKDSRPAED) is disordered. The segment at 3–34 (CPYCSSEDSQVKDSRPAEDGNAIRRRRICPDC) is a zinc-finger region. Residues 11-21 (SQVKDSRPAED) show a composition bias toward basic and acidic residues. In terms of domain architecture, ATP-cone spans 49-139 (LMIIKKTGRK…VYRDFSHAED (91 aa)).

This sequence belongs to the NrdR family. Requires Zn(2+) as cofactor.

In terms of biological role, negatively regulates transcription of bacterial ribonucleotide reductase nrd genes and operons by binding to NrdR-boxes. The protein is Transcriptional repressor NrdR of Sinorhizobium fredii (strain NBRC 101917 / NGR234).